The following is a 304-amino-acid chain: Putative S-adenosyl-L-methionine-dependent methyltransferase MAV_4236 (304 aa).

S-adenosyl-L-methionine contacts are provided by residues D129 and D158–L159.

This sequence belongs to the UPF0677 family.

Exhibits S-adenosyl-L-methionine-dependent methyltransferase activity. The polypeptide is Putative S-adenosyl-L-methionine-dependent methyltransferase MAV_4236 (Mycobacterium avium (strain 104)).